Here is an 839-residue protein sequence, read N- to C-terminus: AMP deaminase (839 aa).

A helical membrane pass occupies residues 8–28; sequence LALAALFGASFVAVSGFFMHF. Residues 40 to 167 are disordered; sequence ERKENPDGDE…DDDDNLTNSE (128 aa). Positions 85 to 94 are enriched in gly residues; it reads DGGGGGGGDT. Residues Ser-134 and Ser-140 each carry the phosphoserine modification. Residues 153-162 show a composition bias toward acidic residues; the sequence is SVEESDDDDN. Residue Ser-203 is modified to Phosphoserine. Position 289-296 (289-296) interacts with ATP; that stretch reads AHYPQGKS. Residues His-391 and His-393 each contribute to the Zn(2+) site. Residues His-393 and 462 to 467 each bind substrate; that span reads KFNLKY. His-659 provides a ligand contact to Zn(2+). Glu-662 is a substrate binding site. Residue His-681 is the Proton acceptor of the active site. Asp-736 is a Zn(2+) binding site. Residue 737–740 participates in substrate binding; that stretch reads DPLQ.

Belongs to the metallo-dependent hydrolases superfamily. Adenosine and AMP deaminases family. Homodimer. Interacts with AHK4. Interacts with EER5. The cofactor is Zn(2+). Expressed in seedlings, roots, leaves, flowers, pollen grains, pollen tubes and siliques, and at a lower level in stems.

The protein resides in the membrane. It is found in the microsome membrane. It catalyses the reaction AMP + H2O + H(+) = IMP + NH4(+). Its pathway is purine metabolism; IMP biosynthesis via salvage pathway; IMP from AMP: step 1/1. With respect to regulation, activated by ATP. Activated by sulfate ions (in vitro). Inhibited by phosphate ions. In terms of biological role, AMP deaminase plays a critical role in energy metabolism. Essential for the transition from zygote to embryo. The polypeptide is AMP deaminase (Arabidopsis thaliana (Mouse-ear cress)).